We begin with the raw amino-acid sequence, 800 residues long: Ion-translocating oxidoreductase complex subunit C (800 aa).

4Fe-4S ferredoxin-type domains follow at residues 367-398 (DEFS…QQLY) and 408-437 (KARG…VQYY). Positions 378, 381, 384, 388, 417, 420, 423, and 427 each coordinate [4Fe-4S] cluster. 5 stretches are compositionally biased toward low complexity: residues 536 to 553 (GATP…APAP), 571 to 583 (AKQA…PAAT), 599 to 617 (AAIA…APAA), 647 to 667 (AKQA…ADPA), and 675 to 690 (AAIA…KQAA). 3 disordered regions span residues 536–558 (GATP…DDPR), 571–631 (AKQA…QDDP), and 647–706 (AKQA…ENTD). Residues 693–705 (HATTEPVTVQENT) are compositionally biased toward polar residues.

It belongs to the 4Fe4S bacterial-type ferredoxin family. RnfC subfamily. The complex is composed of six subunits: RnfA, RnfB, RnfC, RnfD, RnfE and RnfG. The cofactor is [4Fe-4S] cluster.

It is found in the cell inner membrane. Its function is as follows. Part of a membrane-bound complex that couples electron transfer with translocation of ions across the membrane. This chain is Ion-translocating oxidoreductase complex subunit C, found in Edwardsiella ictaluri (strain 93-146).